A 245-amino-acid polypeptide reads, in one-letter code: Ribosomal RNA large subunit methyltransferase E (245 aa).

The disordered stretch occupies residues 1–25 (MTKSPIGGNRSGRKLGQKVKKGKLK). The segment covering 11-25 (SGRKLGQKVKKGKLK) has biased composition (basic residues). Residues Gly-81, Trp-83, Asp-104, Asp-120, and Asp-144 each coordinate S-adenosyl-L-methionine. The Proton acceptor role is filled by Lys-184.

This sequence belongs to the class I-like SAM-binding methyltransferase superfamily. RNA methyltransferase RlmE family.

Its subcellular location is the cytoplasm. It catalyses the reaction uridine(2552) in 23S rRNA + S-adenosyl-L-methionine = 2'-O-methyluridine(2552) in 23S rRNA + S-adenosyl-L-homocysteine + H(+). Specifically methylates the uridine in position 2552 of 23S rRNA at the 2'-O position of the ribose in the fully assembled 50S ribosomal subunit. This is Ribosomal RNA large subunit methyltransferase E from Sinorhizobium fredii (strain NBRC 101917 / NGR234).